A 269-amino-acid polypeptide reads, in one-letter code: Ribosomal RNA large subunit methyltransferase E (269 aa).

Residues Gly58, Trp60, Asp78, Asp96, and Asp120 each contribute to the S-adenosyl-L-methionine site. Lys160 acts as the Proton acceptor in catalysis. The disordered stretch occupies residues 234 to 269; sequence HEKKEGNETSDNDEDNNKNGLMIKKIKELRGKRSKL. Residues 258–269 are compositionally biased toward basic and acidic residues; the sequence is KIKELRGKRSKL.

The protein belongs to the class I-like SAM-binding methyltransferase superfamily. RNA methyltransferase RlmE family.

The protein localises to the cytoplasm. The catalysed reaction is uridine(2552) in 23S rRNA + S-adenosyl-L-methionine = 2'-O-methyluridine(2552) in 23S rRNA + S-adenosyl-L-homocysteine + H(+). Its function is as follows. Specifically methylates the uridine in position 2552 of 23S rRNA at the 2'-O position of the ribose in the fully assembled 50S ribosomal subunit. In Methanococcus aeolicus (strain ATCC BAA-1280 / DSM 17508 / OCM 812 / Nankai-3), this protein is Ribosomal RNA large subunit methyltransferase E.